The chain runs to 282 residues: MKIVTTVQEMQHITKELRASGKSIGFVPTMGYLHEGHATLLRKAREENEIVVLSVFVNPLQFGPNEDLDRYPRDIDRDENVAKENGVDYLFYPSVEEMYPAEQTTTVEVVKRTDVLCGKQRPGHFAGVATVLMKLFNITLPTRAYFGMKDAQQVAVIEGFVADFNIPVTIVRVDIVREEDGLAKSSRNVYLSQEERKEAPHLYRSLCMAKERIEAGERNAEIITTLVKEYIETYTKGTVDYADLYAYPSLQVVDQIEGRIILAIAVKFENVRLIDNITLTVK.

An ATP-binding site is contributed by 30 to 37 (MGYLHEGH). The Proton donor role is filled by His-37. Gln-61 is a binding site for (R)-pantoate. Gln-61 contributes to the beta-alanine binding site. Residue 147-150 (GMKD) participates in ATP binding. A (R)-pantoate-binding site is contributed by Gln-153. ATP is bound by residues Val-176 and 184–187 (KSSR).

The protein belongs to the pantothenate synthetase family. As to quaternary structure, homodimer.

It localises to the cytoplasm. The catalysed reaction is (R)-pantoate + beta-alanine + ATP = (R)-pantothenate + AMP + diphosphate + H(+). It functions in the pathway cofactor biosynthesis; (R)-pantothenate biosynthesis; (R)-pantothenate from (R)-pantoate and beta-alanine: step 1/1. Catalyzes the condensation of pantoate with beta-alanine in an ATP-dependent reaction via a pantoyl-adenylate intermediate. The chain is Pantothenate synthetase from Bacillus cereus (strain ZK / E33L).